Reading from the N-terminus, the 490-residue chain is Aspartyl/glutamyl-tRNA(Asn/Gln) amidotransferase subunit B (490 aa).

It belongs to the GatB/GatE family. GatB subfamily. In terms of assembly, heterotrimer of A, B and C subunits.

The enzyme catalyses L-glutamyl-tRNA(Gln) + L-glutamine + ATP + H2O = L-glutaminyl-tRNA(Gln) + L-glutamate + ADP + phosphate + H(+). It carries out the reaction L-aspartyl-tRNA(Asn) + L-glutamine + ATP + H2O = L-asparaginyl-tRNA(Asn) + L-glutamate + ADP + phosphate + 2 H(+). In terms of biological role, allows the formation of correctly charged Asn-tRNA(Asn) or Gln-tRNA(Gln) through the transamidation of misacylated Asp-tRNA(Asn) or Glu-tRNA(Gln) in organisms which lack either or both of asparaginyl-tRNA or glutaminyl-tRNA synthetases. The reaction takes place in the presence of glutamine and ATP through an activated phospho-Asp-tRNA(Asn) or phospho-Glu-tRNA(Gln). In Prochlorococcus marinus (strain MIT 9312), this protein is Aspartyl/glutamyl-tRNA(Asn/Gln) amidotransferase subunit B.